Consider the following 511-residue polypeptide: Transcription factor bHLH28 (511 aa).

The bHLH domain occupies 339 to 388; that stretch reads DKPLNHVEAERMRREKLNHRFYALRAVVPNVSKMDKTSLLEDAVCYINEL.

As to quaternary structure, homodimer.

The protein resides in the nucleus. In Arabidopsis thaliana (Mouse-ear cress), this protein is Transcription factor bHLH28 (BHLH28).